Reading from the N-terminus, the 410-residue chain is UDP-N-acetylglucosamine--N-acetylmuramyl-(pentapeptide) pyrophosphoryl-undecaprenol N-acetylglucosamine transferase (410 aa).

Positions 1–34 (MKDTVSQPAGGRGATAPRPADAASPSCGSSPSAD) are disordered. Over residues 14-34 (ATAPRPADAASPSCGSSPSAD) the composition is skewed to low complexity. Residues 45–47 (TAG), Asn-167, Arg-204, Ser-238, and Gln-334 each bind UDP-N-acetyl-alpha-D-glucosamine.

Belongs to the glycosyltransferase 28 family. MurG subfamily.

It is found in the cell membrane. The enzyme catalyses di-trans,octa-cis-undecaprenyl diphospho-N-acetyl-alpha-D-muramoyl-L-alanyl-D-glutamyl-meso-2,6-diaminopimeloyl-D-alanyl-D-alanine + UDP-N-acetyl-alpha-D-glucosamine = di-trans,octa-cis-undecaprenyl diphospho-[N-acetyl-alpha-D-glucosaminyl-(1-&gt;4)]-N-acetyl-alpha-D-muramoyl-L-alanyl-D-glutamyl-meso-2,6-diaminopimeloyl-D-alanyl-D-alanine + UDP + H(+). The protein operates within cell wall biogenesis; peptidoglycan biosynthesis. Its function is as follows. Cell wall formation. Catalyzes the transfer of a GlcNAc subunit on undecaprenyl-pyrophosphoryl-MurNAc-pentapeptide (lipid intermediate I) to form undecaprenyl-pyrophosphoryl-MurNAc-(pentapeptide)GlcNAc (lipid intermediate II). In Mycobacterium bovis (strain ATCC BAA-935 / AF2122/97), this protein is UDP-N-acetylglucosamine--N-acetylmuramyl-(pentapeptide) pyrophosphoryl-undecaprenol N-acetylglucosamine transferase.